Here is a 302-residue protein sequence, read N- to C-terminus: Serine/threonine-protein phosphatase alpha-2 isoform (302 aa).

Residues D62, H64, D90, and N122 each contribute to the Mn(2+) site. The Proton donor role is filled by H123. Mn(2+) contacts are provided by H171 and H246.

This sequence belongs to the PPP phosphatase family. PP-1 subfamily. Interacts with Nop17l. Interacts with uri; uri inhibits Pp1-87B phosphatase activity. Interacts with Rif1. Requires Mn(2+) as cofactor.

It is found in the cytoplasm. The catalysed reaction is O-phospho-L-seryl-[protein] + H2O = L-seryl-[protein] + phosphate. It catalyses the reaction O-phospho-L-threonyl-[protein] + H2O = L-threonyl-[protein] + phosphate. In terms of biological role, is essential for the regulation of mitotic chromosomal segregation as well as regulation of chromatin condensation during interphase. The polypeptide is Serine/threonine-protein phosphatase alpha-2 isoform (Pp1-87B) (Drosophila melanogaster (Fruit fly)).